Here is a 221-residue protein sequence, read N- to C-terminus: Endonuclease V (221 aa).

Residues D38 and D104 each contribute to the Mg(2+) site.

This sequence belongs to the endonuclease V family. Requires Mg(2+) as cofactor.

The protein resides in the cytoplasm. It carries out the reaction Endonucleolytic cleavage at apurinic or apyrimidinic sites to products with a 5'-phosphate.. In terms of biological role, DNA repair enzyme involved in the repair of deaminated bases. Selectively cleaves double-stranded DNA at the second phosphodiester bond 3' to a deoxyinosine leaving behind the intact lesion on the nicked DNA. Recognizes only deoxyinosine. This chain is Endonuclease V, found in Archaeoglobus fulgidus (strain ATCC 49558 / DSM 4304 / JCM 9628 / NBRC 100126 / VC-16).